The following is a 300-amino-acid chain: Putative hydrolase ML2424 (300 aa).

Asp56 (nucleophile) is an active-site residue. Asp56, Asp58, and Asp231 together coordinate Mg(2+). The active-site Proton donor is the Asp58.

The protein belongs to the HAD-like hydrolase superfamily. SerB family. The cofactor is Mg(2+).

This Mycobacterium leprae (strain TN) protein is Putative hydrolase ML2424.